A 140-amino-acid chain; its full sequence is Nucleoside diphosphate kinase (140 aa).

Residues Lys-11, Phe-59, Arg-87, Thr-93, Arg-104, and Asn-114 each contribute to the ATP site. The active-site Pros-phosphohistidine intermediate is the His-117.

This sequence belongs to the NDK family. In terms of assembly, homotetramer. The cofactor is Mg(2+).

The protein localises to the cytoplasm. It catalyses the reaction a 2'-deoxyribonucleoside 5'-diphosphate + ATP = a 2'-deoxyribonucleoside 5'-triphosphate + ADP. The catalysed reaction is a ribonucleoside 5'-diphosphate + ATP = a ribonucleoside 5'-triphosphate + ADP. Functionally, major role in the synthesis of nucleoside triphosphates other than ATP. The ATP gamma phosphate is transferred to the NDP beta phosphate via a ping-pong mechanism, using a phosphorylated active-site intermediate. The polypeptide is Nucleoside diphosphate kinase (Rickettsia canadensis (strain McKiel)).